The sequence spans 282 residues: Shikimate dehydrogenase (NADP(+)) (282 aa).

Shikimate is bound by residues 15–17 (SKS) and T62. K66 serves as the catalytic Proton acceptor. Shikimate-binding residues include N87 and D103. Residues 128-132 (GAGGA), 152-157 (NRTPAK), and M216 contribute to the NADP(+) site. Y218 serves as a coordination point for shikimate. G240 is a binding site for NADP(+).

This sequence belongs to the shikimate dehydrogenase family. In terms of assembly, homodimer.

The catalysed reaction is shikimate + NADP(+) = 3-dehydroshikimate + NADPH + H(+). The protein operates within metabolic intermediate biosynthesis; chorismate biosynthesis; chorismate from D-erythrose 4-phosphate and phosphoenolpyruvate: step 4/7. Its function is as follows. Involved in the biosynthesis of the chorismate, which leads to the biosynthesis of aromatic amino acids. Catalyzes the reversible NADPH linked reduction of 3-dehydroshikimate (DHSA) to yield shikimate (SA). The chain is Shikimate dehydrogenase (NADP(+)) from Nitrosococcus oceani (strain ATCC 19707 / BCRC 17464 / JCM 30415 / NCIMB 11848 / C-107).